Reading from the N-terminus, the 149-residue chain is UPF0179 protein rrnAC1064 (149 aa).

It belongs to the UPF0179 family.

The polypeptide is UPF0179 protein rrnAC1064 (Haloarcula marismortui (strain ATCC 43049 / DSM 3752 / JCM 8966 / VKM B-1809) (Halobacterium marismortui)).